Here is a 264-residue protein sequence, read N- to C-terminus: Endoglucanase S (264 aa).

The first 32 residues, 1–32 (MQTVNTQPHRIFRVLLPAVFSSLLLSSLTVSA), serve as a signal peptide directing secretion.

It belongs to the glycosyl hydrolase 12 (cellulase H) family.

It catalyses the reaction Endohydrolysis of (1-&gt;4)-beta-D-glucosidic linkages in cellulose, lichenin and cereal beta-D-glucans.. The sequence is that of Endoglucanase S (celS) from Pectobacterium parmentieri.